Here is a 331-residue protein sequence, read N- to C-terminus: MTETYDITIIGGGPAGMFAAFYAGMHNAKTQLLESLSELGGQVNALYPEKTILDVAGLPAINGRDLIKAQREQLTQFPLTIKTGQEVTNVTANEVGFTVTTDAGTTQTTAIIVAIGNGAFAPRPLTVPGAEAATGKQLVYSVPRLADFQDQTVMVAGGGDAAIDQALMLEPVAKSVTLLHRRAQFRGLAHMVDLLHASTVAVKTPYLIREVAPTATGQLKVTLKEVGSQTATAEQIVDKLVVSYGYTSDHHTLAGWDIDLAETRNLINVSQTMETSVPGIYAIGDGVTYPGKQPLIATGYGEAPVAVQSIMTQFFPDRRGPMHSTSLTPQS.

FAD is bound by residues Glu-34, Gln-42, Tyr-47, Val-87, Phe-120, Asp-285, and Thr-325.

This sequence belongs to the ferredoxin--NADP reductase type 2 family. In terms of assembly, homodimer. FAD is required as a cofactor.

It carries out the reaction 2 reduced [2Fe-2S]-[ferredoxin] + NADP(+) + H(+) = 2 oxidized [2Fe-2S]-[ferredoxin] + NADPH. The polypeptide is Ferredoxin--NADP reductase (Levilactobacillus brevis (strain ATCC 367 / BCRC 12310 / CIP 105137 / JCM 1170 / LMG 11437 / NCIMB 947 / NCTC 947) (Lactobacillus brevis)).